A 99-amino-acid chain; its full sequence is DNA-directed RNA polymerase subunit omega (99 aa).

It belongs to the RNA polymerase subunit omega family. In terms of assembly, the RNAP catalytic core consists of 2 alpha, 1 beta, 1 beta' and 1 omega subunit. When a sigma factor is associated with the core the holoenzyme is formed, which can initiate transcription.

The catalysed reaction is RNA(n) + a ribonucleoside 5'-triphosphate = RNA(n+1) + diphosphate. Promotes RNA polymerase assembly. Latches the N- and C-terminal regions of the beta' subunit thereby facilitating its interaction with the beta and alpha subunits. This chain is DNA-directed RNA polymerase subunit omega, found in Thermus thermophilus (strain ATCC BAA-163 / DSM 7039 / HB27).